The following is a 777-amino-acid chain: Double zinc ribbon and ankyrin repeat-containing protein 1 (777 aa).

Residues 161–176 (QVGERTDPKTLKDLRF) are compositionally biased toward basic and acidic residues. A disordered region spans residues 161–202 (QVGERTDPKTLKDLRFSESPLEIPAHSGGSGSRPPTRQSQSP). The segment covering 193-202 (RPPTRQSQSP) has biased composition (polar residues). Phosphoserine is present on S201. 2 DZANK-type zinc fingers span residues 230-289 (CAHC…CVVC) and 358-406 (CSRC…GSCG). ANK repeat units lie at residues 442–473 (NIPL…LLAK) and 477–506 (EIAS…GYWR).

In terms of assembly, interacts with NINL. Associates with DYNC1H1 and multiple dynein intermediate and light chains as well as actin-binding proteins.

The protein resides in the cytoplasm. It is found in the cytoskeleton. The protein localises to the microtubule organizing center. It localises to the centrosome. Its subcellular location is the cilium basal body. Functionally, involved in vesicle transport in photoreceptor cells. The polypeptide is Double zinc ribbon and ankyrin repeat-containing protein 1 (DZANK1) (Macaca fascicularis (Crab-eating macaque)).